The sequence spans 175 residues: MKTALLLEKLEGQLATLRQRCAPVSQFATLSARFDRHLFQTRATTLQACLDEAGDNLAALRHAVEQQQLPQVAWLAEHLAAQLEAIAREASAWSLREWDSAPPKIARWQRKRIQHQDFERRLREMVAERRARLARVTDLVEQQTLHREVEAYEARLARCRHALEKIENRLARLTR.

Belongs to the PriC family. In terms of assembly, monomer. Oligomerizes in the absence of DNA. Component of the replication restart primosome, which is composed of PriA, PriB, PriC, DnaB and DnaT; DnaG primase associates transiently with this complex. Interacts with the C-terminus of SSB; this interaction is required for DnaB loading onto substrate replication forks. Interacts with DnaB alone and in the DnaB-DnaC complex, probably 1:1 binding with DnaB.

Involved in the restart of stalled replication forks, which reloads the replicative helicase (DnaB) on sites other than the origin of replication. Recognizes abandoned replication forks and remodels DNA single-stranded binding protein (SSB) on ssDNA to uncover a loading site for DnaB. There are several restart pathways, the PriA-PriC pathway is a minor restart pathway. Also part of the minor PriC-Rep pathway for restart of stalled replication forks, which has a different substrate specificity than PriA. priB and priC have redundant roles in the cell. Stimulates the 3'-5' helicase activity of Rep helicase in vitro. In vitro can load the DnaB replicative helicase from a DnaB-DnaC complex on an SSB-coated stalled replication fork with no leading- or lagging-strand (or with a gap between the leading strand and fork junction) in the absence of other primosome proteins (PriA, PriB or DnaT). Also part of the major restart pathway with PriA, PriB, DnaB, DnaT and DnaG primase. PriC may contribute to the stability of the preprimosome complex. Preferentially binds approximately 7-9 nucleotides of single-stranded (ss)DNA, also binds double-stranded (ds)DNA. PriB is probably more important in the cell than PriC. This Escherichia coli (strain K12) protein is Replication restart protein PriC.